The sequence spans 375 residues: tRNA-specific 2-thiouridylase MnmA (375 aa).

ATP is bound by residues 18 to 25 and methionine 44; that span reads GMSGGVDS. The interaction with target base in tRNA stretch occupies residues 104–106; it reads NPD. Cysteine 109 serves as the catalytic Nucleophile. Cysteine 109 and cysteine 206 form a disulfide bridge. An ATP-binding site is contributed by glycine 134. An interaction with tRNA region spans residues 156-158; it reads KDQ. Catalysis depends on cysteine 206, which acts as the Cysteine persulfide intermediate. An interaction with tRNA region spans residues 318–319; that stretch reads RY.

Belongs to the MnmA/TRMU family.

The protein localises to the cytoplasm. The catalysed reaction is S-sulfanyl-L-cysteinyl-[protein] + uridine(34) in tRNA + AH2 + ATP = 2-thiouridine(34) in tRNA + L-cysteinyl-[protein] + A + AMP + diphosphate + H(+). Its function is as follows. Catalyzes the 2-thiolation of uridine at the wobble position (U34) of tRNA, leading to the formation of s(2)U34. This chain is tRNA-specific 2-thiouridylase MnmA, found in Colwellia psychrerythraea (strain 34H / ATCC BAA-681) (Vibrio psychroerythus).